A 489-amino-acid chain; its full sequence is Cysteine--tRNA ligase (489 aa).

C27 contributes to the Zn(2+) binding site. Residues 29-39 (VTVYDLCHLGH) carry the 'HIGH' region motif. C211, H236, and E240 together coordinate Zn(2+). Residues 268 to 272 (KMSKS) carry the 'KMSKS' region motif. An ATP-binding site is contributed by K271.

This sequence belongs to the class-I aminoacyl-tRNA synthetase family. As to quaternary structure, monomer. Zn(2+) is required as a cofactor.

The protein resides in the cytoplasm. The catalysed reaction is tRNA(Cys) + L-cysteine + ATP = L-cysteinyl-tRNA(Cys) + AMP + diphosphate. This Prochlorococcus marinus (strain MIT 9215) protein is Cysteine--tRNA ligase.